We begin with the raw amino-acid sequence, 654 residues long: tRNA 5-methylaminomethyl-2-thiouridine biosynthesis bifunctional protein MnmC (654 aa).

The tract at residues 1-236 (MSTLLQHAQI…KWEVMSGAYV (236 aa)) is tRNA (mnm(5)s(2)U34)-methyltransferase. The segment at 262-654 (IGAGLAGSTT…FALRRLIRGK (393 aa)) is FAD-dependent cmnm(5)s(2)U34 oxidoreductase.

It in the N-terminal section; belongs to the methyltransferase superfamily. tRNA (mnm(5)s(2)U34)-methyltransferase family. This sequence in the C-terminal section; belongs to the DAO family. Requires FAD as cofactor.

It is found in the cytoplasm. The enzyme catalyses 5-aminomethyl-2-thiouridine(34) in tRNA + S-adenosyl-L-methionine = 5-methylaminomethyl-2-thiouridine(34) in tRNA + S-adenosyl-L-homocysteine + H(+). Its function is as follows. Catalyzes the last two steps in the biosynthesis of 5-methylaminomethyl-2-thiouridine (mnm(5)s(2)U) at the wobble position (U34) in tRNA. Catalyzes the FAD-dependent demodification of cmnm(5)s(2)U34 to nm(5)s(2)U34, followed by the transfer of a methyl group from S-adenosyl-L-methionine to nm(5)s(2)U34, to form mnm(5)s(2)U34. This chain is tRNA 5-methylaminomethyl-2-thiouridine biosynthesis bifunctional protein MnmC, found in Pseudomonas putida (strain GB-1).